The primary structure comprises 750 residues: Photosystem I P700 chlorophyll a apoprotein A1 (750 aa).

The next 8 helical transmembrane spans lie at V70–A93, L156–H179, L195–L219, I291–Y309, W346–Y369, L385–V411, A433–H455, and F531–L549. Residues C573 and C582 each coordinate [4Fe-4S] cluster. 2 helical membrane-spanning segments follow: residues H589–W610 and L664–F686. Residue H675 coordinates chlorophyll a'. 2 residues coordinate chlorophyll a: M683 and Y691. W692 contacts phylloquinone. Residues A724–A744 traverse the membrane as a helical segment.

Belongs to the PsaA/PsaB family. As to quaternary structure, the PsaA/B heterodimer binds the P700 chlorophyll special pair and subsequent electron acceptors. PSI consists of a core antenna complex that captures photons, and an electron transfer chain that converts photonic excitation into a charge separation. The eukaryotic PSI reaction center is composed of at least 11 subunits. The cofactor is P700 is a chlorophyll a/chlorophyll a' dimer, A0 is one or more chlorophyll a, A1 is one or both phylloquinones and FX is a shared 4Fe-4S iron-sulfur center..

The protein localises to the plastid. It localises to the chloroplast thylakoid membrane. The catalysed reaction is reduced [plastocyanin] + hnu + oxidized [2Fe-2S]-[ferredoxin] = oxidized [plastocyanin] + reduced [2Fe-2S]-[ferredoxin]. PsaA and PsaB bind P700, the primary electron donor of photosystem I (PSI), as well as the electron acceptors A0, A1 and FX. PSI is a plastocyanin-ferredoxin oxidoreductase, converting photonic excitation into a charge separation, which transfers an electron from the donor P700 chlorophyll pair to the spectroscopically characterized acceptors A0, A1, FX, FA and FB in turn. Oxidized P700 is reduced on the lumenal side of the thylakoid membrane by plastocyanin. This is Photosystem I P700 chlorophyll a apoprotein A1 from Eucalyptus globulus subsp. globulus (Tasmanian blue gum).